Consider the following 312-residue polypeptide: Protein phosphatase PTC7 homolog fig (312 aa).

Residues 42-306 form the PPM-type phosphatase domain; the sequence is IQGSSKDQLA…DDITVILASV (265 aa). The Mn(2+) site is built by Asp83, Gly84, and Asp228.

It belongs to the PP2C family. The cofactor is Mg(2+). Requires Mn(2+) as cofactor.

The catalysed reaction is O-phospho-L-seryl-[protein] + H2O = L-seryl-[protein] + phosphate. It carries out the reaction O-phospho-L-threonyl-[protein] + H2O = L-threonyl-[protein] + phosphate. The sequence is that of Protein phosphatase PTC7 homolog fig from Drosophila mojavensis (Fruit fly).